The sequence spans 178 residues: Heavy metal-associated isoprenylated plant protein 30 (178 aa).

In terms of domain architecture, HMA spans 45–108; that stretch reads LQTIDLKVRM…AVRRAGKRAE (64 aa). Residues C56 and C59 each contribute to the a metal cation site. C175 carries the cysteine methyl ester modification. C175 carries S-farnesyl cysteine lipidation. Positions 176–178 are cleaved as a propeptide — removed in mature form; that stretch reads SLM.

This sequence belongs to the HIPP family. As to quaternary structure, interacts with ZHD3/HB21, ZHD11/HB29 and ZHD8/HB30.

In terms of biological role, heavy-metal-binding protein. This is Heavy metal-associated isoprenylated plant protein 30 from Arabidopsis thaliana (Mouse-ear cress).